We begin with the raw amino-acid sequence, 127 residues long: Protein yippee-like 4 (127 aa).

The Yippee domain occupies 27–124 (RTYSCVHCRA…IEMSHMVKDN (98 aa)). C31, C34, C87, and C90 together coordinate Zn(2+). Phosphothreonine occurs at positions 92 and 93. Y98 is modified (phosphotyrosine).

The protein belongs to the yippee family. In terms of tissue distribution, detected in brain, spleen and testis.

The protein localises to the nucleus. It localises to the nucleolus. The polypeptide is Protein yippee-like 4 (Ypel4) (Mus musculus (Mouse)).